A 649-amino-acid chain; its full sequence is L-ornithine N(5)-monooxygenase (649 aa).

Residues 72 to 80 (EKRGHFAWH) and Gln-91 each bind FAD. Lys-96 is a binding site for substrate. Val-157 contacts FAD. Residues 289–292 (AGQS) and Arg-314 contribute to the NADP(+) site. Residues 328-331 (NSAA) and Asn-359 each bind substrate. NADP(+) is bound at residue 359-361 (NYS). A disordered region spans residues 512-547 (AMQSDAVRSGKSSPGSGSDASSTSSQQTLASENSTE). Residues 520 to 536 (SGKSSPGSGSDASSTSS) show a composition bias toward low complexity. The span at 537-547 (QQTLASENSTE) shows a compositional bias: polar residues. 569–571 (SLL) serves as a coordination point for FAD. Ser-572 lines the substrate pocket. Positions 585-611 (LLQRLPRTRRGTASSAATQPAASTVAS) are disordered. Over residues 596–611 (TASSAATQPAASTVAS) the composition is skewed to low complexity.

This sequence belongs to the lysine N(6)-hydroxylase/L-ornithine N(5)-oxygenase family. Homotetramer. The cofactor is FAD.

It carries out the reaction L-ornithine + NADPH + O2 = N(5)-hydroxy-L-ornithine + NADP(+) + H2O. The catalysed reaction is L-ornithine + NADH + O2 = N(5)-hydroxy-L-ornithine + NAD(+) + H2O. It functions in the pathway siderophore biosynthesis; ferrichrome biosynthesis. Catalyzes the conversion of L-ornithine to N(5)-hydroxyornithine, the first step in the biosynthesis of all hydroxamate-containing siderophores, such as ferrichrome. The polypeptide is L-ornithine N(5)-monooxygenase (SID1) (Mycosarcoma maydis (Corn smut fungus)).